Consider the following 437-residue polypeptide: MTTSTLQKAIDLVTKATEEDKAKNYEEALRLYQHAVEYFLHAIKYEAHSDKAKESIRAKCVQYLDRAEKLKDYLRSKEKHGKKPVKENQSEGKGSDSDSEGDNPEKKKLQEQLMGAVVMEKPNIRWNDVAGLEGAKEALKEAVILPIKFPHLFTGKRTPWRGILLFGPPGTGKSYLAKAVATEANNSTFFSVSSSDLMSKWLGESEKLVKNLFELARQHKPSIIFIDEVDSLCGSRNENESEAARRIKTEFLVQMQGVGNNNDGTLVLGATNIPWVLDSAIRRRFEKRIYIPLPEEAARAQMFRLHLGSTPHNLTDANIHELARKTEGYSGADISIIVRDSLMQPVRKVQSATHFKKVCGPSRTNPSMMIDDLLTPCSPGDPGAMEMTWMDVPGDKLLEPVVCMSDMLRSLATTRPTVNADDLLKVKKFSEDFGQES.

An interaction with CHMP1B region spans residues methionine 1–proline 84. Positions threonine 2–histidine 80 constitute an MIT domain. Residue lysine 8 is modified to N6-acetyllysine. The interval arginine 75 to lysine 106 is disordered. Over residues proline 84 to aspartate 96 the composition is skewed to basic and acidic residues. Residues serine 95 and serine 97 each carry the phosphoserine modification. Residue glycine 167–serine 174 coordinates ATP.

Belongs to the AAA ATPase family. In terms of assembly, proposed to be monomeric or homodimeric in nucleotide-free form and to oligomerize upon binding to ATP to form two stacked hexameric or heptameric rings with a central pore through which ESCRT-III substrates are translocated in an ATP-dependent manner. Interacts with CHMP1A, CHMP1B, CHMP2A, CHMP2B, CHMP3, CHMP4A, CHMP4B, CHMP4C and CHMP6. Interacts with VPS4B; the interaction suggests a heteromeric assembly with VPS4B. Interacts with SPAST. Interacts with IST1. Interacts with ZFYVE19/ANCHR; leading to retain it at midbody. As to expression, ubiquitously expressed.

It localises to the late endosome membrane. The protein resides in the midbody. It is found in the cytoplasm. Its subcellular location is the cytoskeleton. The protein localises to the spindle. It catalyses the reaction ATP + H2O = ADP + phosphate + H(+). Involved in late steps of the endosomal multivesicular bodies (MVB) pathway. Recognizes membrane-associated ESCRT-III assemblies and catalyzes their disassembly, possibly in combination with membrane fission. Redistributes the ESCRT-III components to the cytoplasm for further rounds of MVB sorting. MVBs contain intraluminal vesicles (ILVs) that are generated by invagination and scission from the limiting membrane of the endosome and mostly are delivered to lysosomes enabling degradation of membrane proteins, such as stimulated growth factor receptors, lysosomal enzymes and lipids. It is required for proper accomplishment of various processes including the regulation of endosome size, primary cilium organization, mitotic spindle organization, chromosome segregation, and nuclear envelope sealing and spindle disassembly during anaphase. Involved in cytokinesis: retained at the midbody by ZFYVE19/ANCHR and CHMP4C until abscission checkpoint signaling is terminated at late cytokinesis. It is then released following dephosphorylation of CHMP4C, leading to abscission. VPS4A/B are required for the exosomal release of SDCBP, CD63 and syndecan. Critical for normal erythroblast cytokinesis and correct erythropoiesis. Functionally, (Microbial infection) In conjunction with the ESCRT machinery also appears to function in topologically equivalent membrane fission events, such as the terminal stages of cytokinesis and enveloped virus budding (HIV-1 and other lentiviruses). This chain is Vacuolar protein sorting-associated protein 4A, found in Homo sapiens (Human).